Here is a 522-residue protein sequence, read N- to C-terminus: Bifunctional purine biosynthesis protein PurH (522 aa).

The MGS-like domain occupies 1–145 (MKPIARALIS…KNHAAVTVIV (145 aa)).

This sequence belongs to the PurH family.

It carries out the reaction (6R)-10-formyltetrahydrofolate + 5-amino-1-(5-phospho-beta-D-ribosyl)imidazole-4-carboxamide = 5-formamido-1-(5-phospho-D-ribosyl)imidazole-4-carboxamide + (6S)-5,6,7,8-tetrahydrofolate. The catalysed reaction is IMP + H2O = 5-formamido-1-(5-phospho-D-ribosyl)imidazole-4-carboxamide. Its pathway is purine metabolism; IMP biosynthesis via de novo pathway; 5-formamido-1-(5-phospho-D-ribosyl)imidazole-4-carboxamide from 5-amino-1-(5-phospho-D-ribosyl)imidazole-4-carboxamide (10-formyl THF route): step 1/1. The protein operates within purine metabolism; IMP biosynthesis via de novo pathway; IMP from 5-formamido-1-(5-phospho-D-ribosyl)imidazole-4-carboxamide: step 1/1. This Nitrosococcus oceani (strain ATCC 19707 / BCRC 17464 / JCM 30415 / NCIMB 11848 / C-107) protein is Bifunctional purine biosynthesis protein PurH.